Consider the following 423-residue polypeptide: Glucose-1-phosphate adenylyltransferase (423 aa).

Alpha-D-glucose 1-phosphate contacts are provided by residues Y107, G172, 187–188, and S205; that span reads EK.

This sequence belongs to the bacterial/plant glucose-1-phosphate adenylyltransferase family. As to quaternary structure, homotetramer.

The enzyme catalyses alpha-D-glucose 1-phosphate + ATP + H(+) = ADP-alpha-D-glucose + diphosphate. It participates in glycan biosynthesis; glycogen biosynthesis. Involved in the biosynthesis of ADP-glucose, a building block required for the elongation reactions to produce glycogen. Catalyzes the reaction between ATP and alpha-D-glucose 1-phosphate (G1P) to produce pyrophosphate and ADP-Glc. This Cereibacter sphaeroides (strain ATCC 17025 / ATH 2.4.3) (Rhodobacter sphaeroides) protein is Glucose-1-phosphate adenylyltransferase.